The chain runs to 182 residues: Large ribosomal subunit protein uL6 (182 aa).

Belongs to the universal ribosomal protein uL6 family. Part of the 50S ribosomal subunit.

In terms of biological role, this protein binds to the 23S rRNA, and is important in its secondary structure. It is located near the subunit interface in the base of the L7/L12 stalk, and near the tRNA binding site of the peptidyltransferase center. This is Large ribosomal subunit protein uL6 from Methanocaldococcus jannaschii (strain ATCC 43067 / DSM 2661 / JAL-1 / JCM 10045 / NBRC 100440) (Methanococcus jannaschii).